Here is a 277-residue protein sequence, read N- to C-terminus: Protein OPG166 (277 aa).

2 N-linked (GlcNAc...) asparagine; by host glycosylation sites follow: Asn29 and Asn58. 5 consecutive transmembrane segments (helical) span residues 124–144 (TMLM…EIAY), 156–176 (GILQ…AFLF), 186–206 (IIGL…KVFS), 219–239 (LIIY…GLSL), and 247–267 (LLLS…LFLV).

This sequence belongs to the orthopoxvirus OPG166 protein family.

Its subcellular location is the host membrane. Functionally, promotes, when overexpressed, the influx of extracellular Ca(2+), leading to membrane permeability and host cell necrosis. The sequence is that of Protein OPG166 (OPG166) from Cynomys gunnisoni (Gunnison's prairie dog).